A 92-amino-acid polypeptide reads, in one-letter code: Kinetoplastid membrane protein 11 (92 aa).

It belongs to the KMP-11 family. Monomer.

The protein resides in the cytoplasm. It is found in the cytoskeleton. May be involved in the regulation of the cytoskeleton through interaction with the subpellicular microtubules. May be involved in parasite mobility and attachment to the surface of the host cell. Behaves as a strong immunogen during infection. The polypeptide is Kinetoplastid membrane protein 11 (KMP-11/1) (Trypanosoma brucei brucei).